A 287-amino-acid polypeptide reads, in one-letter code: Transmembrane protein 163 (287 aa).

Residues 1–63 are disordered; that stretch reads METAAGSERR…ESGQFSDGLE (63 aa). At 1–86 the chain is on the cytoplasmic side; sequence METAAGSERR…HEAQNYRKKA (86 aa). Ser-11, Ser-53, Ser-55, and Ser-59 each carry phosphoserine. The interval 40 to 70 is required for interaction with MCOLN1; the sequence is EPPQPEEERQLRISESGQFSDGLEDRGLLES. A helical membrane pass occupies residues 87-107; the sequence is LWVSWFSIIVTLALAVAAFTV. The Extracellular segment spans residues 108-114; the sequence is SVMRYSA. Residues 115–135 traverse the membrane as a helical segment; sequence SAFGFAFDAILDVLSSAIVLW. At 136-148 the chain is on the cytoplasmic side; sequence RYSNAAAVHSAHR. A helical transmembrane segment spans residues 149 to 169; that stretch reads EYIACVILGVIFLLSSVCIVV. Residues 170-185 lie on the Extracellular side of the membrane; the sequence is KAIHDLSTKLLPEVDD. A helical transmembrane segment spans residues 186–206; it reads FLFSVSILSGILCSILAVLKF. Residues 207-215 lie on the Cytoplasmic side of the membrane; sequence MLGKVLTSR. Residues 216–236 form a helical membrane-spanning segment; that stretch reads ALITDGFNSLVGGVMGFSILL. Topologically, residues 237–253 are extracellular; the sequence is SAEVFKHNSAVWYLDGS. Residues 254-274 form a helical membrane-spanning segment; it reads IGVLIGLTIFAYGVKLLIDMV. Residues 275-287 lie on the Cytoplasmic side of the membrane; sequence PRVRQTRHYEMFE.

It belongs to the TMEM163 family. In terms of assembly, homodimer. Interacts with MCOLN1/TRPML1. Interacts with SLC30A1, SLC30A2, SLC30A3 and SLC30A4.

It localises to the cytoplasmic vesicle. The protein localises to the secretory vesicle. It is found in the synaptic vesicle membrane. The protein resides in the early endosome membrane. Its subcellular location is the late endosome membrane. It localises to the lysosome membrane. The protein localises to the cell membrane. It carries out the reaction Zn(2+)(in) = Zn(2+)(out). Zinc ion transporter that mediates zinc efflux and plays a crucial role in intracellular zinc homeostasis. Binds the divalent cations Zn(2+), Ni(2+), and to a minor extent Cu(2+). Is a functional modulator of P2X purinoceptors, including P2RX1, P2RX3, P2RX4 and P2RX7. Plays a role in central nervous system development and is required for myelination, and survival and proliferation of oligodendrocytes. In Bos taurus (Bovine), this protein is Transmembrane protein 163 (TMEM163).